A 747-amino-acid chain; its full sequence is Histone-lysine N-methyltransferase EZH1 (747 aa).

The disordered stretch occupies residues 186-229; the sequence is YSDEDEEGHNDTSDGKQDDSKEDLPVTRKRKRHAIEGSKKSSKK. Positions 194–211 are enriched in basic and acidic residues; that stretch reads HNDTSDGKQDDSKEDLPV. Residue Lys-327 forms a Glycyl lysine isopeptide (Lys-Gly) (interchain with G-Cter in SUMO2) linkage. Residues 375-421 form a disordered region; the sequence is TSASAVAETKEGDSDRDTGNDWASSSSEANSRCQTPTKQKASPAPPQ. Over residues 382–393 the composition is skewed to basic and acidic residues; that stretch reads ETKEGDSDRDTG. A compositionally biased stretch (polar residues) spans 395–414; sequence DWASSSSEANSRCQTPTKQK. The region spanning 504-606 is the CXC domain; sequence CRKIQLKKDN…CKVVSCKNCS (103 aa). The 116-residue stretch at 613-728 folds into the SET domain; the sequence is KHLLLAPSDV…AGEELFFDYR (116 aa).

The protein belongs to the class V-like SAM-binding methyltransferase superfamily. Histone-lysine methyltransferase family. EZ subfamily. In terms of assembly, component of the PRC2/EED-EZH1 complex, which includes EED, EZH1, SUZ12, RBBP4 and AEBP2. The PRC2/EED-EZH1 is less abundant than the PRC2/EED-EZH2 complex, has weak methyltransferase activity and compacts chromatin in the absence of the methyltransferase cofactor S-adenosyl-L-methionine (SAM). Interacts with EZHIP; the interaction blocks EZH1 methyltransferase activity.

It localises to the nucleus. It carries out the reaction L-lysyl(27)-[histone H3] + 3 S-adenosyl-L-methionine = N(6),N(6),N(6)-trimethyl-L-lysyl(27)-[histone H3] + 3 S-adenosyl-L-homocysteine + 3 H(+). Functionally, polycomb group (PcG) protein. Catalytic subunit of the PRC2/EED-EZH1 complex, which methylates 'Lys-27' of histone H3, leading to transcriptional repression of the affected target gene. Able to mono-, di- and trimethylate 'Lys-27' of histone H3 to form H3K27me1, H3K27me2 and H3K27me3, respectively. Required for embryonic stem cell derivation and self-renewal, suggesting that it is involved in safeguarding embryonic stem cell identity. Compared to EZH2-containing complexes, it is less abundant in embryonic stem cells, has weak methyltransferase activity and plays a less critical role in forming H3K27me3, which is required for embryonic stem cell identity and proper differentiation. This chain is Histone-lysine N-methyltransferase EZH1 (EZH1), found in Bos taurus (Bovine).